A 215-amino-acid chain; its full sequence is Pyridoxine/pyridoxamine 5'-phosphate oxidase (215 aa).

Residues 9 to 12 and Lys-67 contribute to the substrate site; that span reads RRDY. FMN-binding positions include 62–67, 77–78, Lys-84, and Gln-106; these read RVVLLK and FT. 3 residues coordinate substrate: Tyr-124, Arg-128, and Ser-132. FMN is bound by residues 141-142 and Trp-186; that span reads QS. 192–194 is a substrate binding site; the sequence is RLH. Arg-196 serves as a coordination point for FMN.

This sequence belongs to the pyridoxamine 5'-phosphate oxidase family. In terms of assembly, homodimer. The cofactor is FMN.

The catalysed reaction is pyridoxamine 5'-phosphate + O2 + H2O = pyridoxal 5'-phosphate + H2O2 + NH4(+). It carries out the reaction pyridoxine 5'-phosphate + O2 = pyridoxal 5'-phosphate + H2O2. It functions in the pathway cofactor metabolism; pyridoxal 5'-phosphate salvage; pyridoxal 5'-phosphate from pyridoxamine 5'-phosphate: step 1/1. The protein operates within cofactor metabolism; pyridoxal 5'-phosphate salvage; pyridoxal 5'-phosphate from pyridoxine 5'-phosphate: step 1/1. Its function is as follows. Catalyzes the oxidation of either pyridoxine 5'-phosphate (PNP) or pyridoxamine 5'-phosphate (PMP) into pyridoxal 5'-phosphate (PLP). This chain is Pyridoxine/pyridoxamine 5'-phosphate oxidase, found in Chromohalobacter salexigens (strain ATCC BAA-138 / DSM 3043 / CIP 106854 / NCIMB 13768 / 1H11).